A 76-amino-acid polypeptide reads, in one-letter code: Toxin Acra III-1 (76 aa).

An LCN-type CS-alpha/beta domain is found at 4-67; that stretch reads PGNYPLDTRG…IWDAVKNHCT (64 aa). Disulfide bonds link C18-C41, C27-C46, and C31-C48.

It belongs to the long (3 C-C) scorpion toxin superfamily. Sodium channel inhibitor family. Beta subfamily. Expressed by the venom gland.

The protein resides in the secreted. In terms of biological role, binds to sodium channels (Nav) and affects the channel activation process. This chain is Toxin Acra III-1, found in Androctonus crassicauda (Arabian fat-tailed scorpion).